Here is a 321-residue protein sequence, read N- to C-terminus: Bifunctional ligase/repressor BirA (321 aa).

The segment at residues 22–41 is a DNA-binding region (H-T-H motif); that stretch reads GEQLGETLGMSRAAINKHIQ. The BPL/LPL catalytic domain maps to 67 to 254; that stretch reads LNAKQILGQL…ELRAALELFE (188 aa). Residues 89–91, Q112, 116–118, and K183 contribute to the biotin site; these read STN and RGR.

It belongs to the biotin--protein ligase family. In terms of assembly, monomer in solution. Interacts with BCCP. Homodimerizes to bind DNA. Interaction with the corepressor bio-5'-AMP increases dimerization.

The catalysed reaction is biotin + L-lysyl-[protein] + ATP = N(6)-biotinyl-L-lysyl-[protein] + AMP + diphosphate + H(+). The switch between the enzymatic activity and the repressor activity is regulated by cellular demand for biotin. The switch occurs by swapping of protein interaction partners by holoBirA. In conditions of high biotin demand, holoBirA associates with apoBCCP to transfer biotin. In conditions of low biotin demand, holoBirA dimerizes, binds DNA and represses transcription of the biotin operon. Functionally, acts both as a biotin--[acetyl-CoA-carboxylase] ligase and a biotin-operon repressor. In the presence of ATP, BirA activates biotin to form the BirA-biotinyl-5'-adenylate (BirA-bio-5'-AMP or holoBirA) complex. HoloBirA can either transfer the biotinyl moiety to the biotin carboxyl carrier protein (BCCP) subunit of acetyl-CoA carboxylase, or bind to the biotin operator site and inhibit transcription of the operon. This chain is Bifunctional ligase/repressor BirA, found in Escherichia coli (strain K12).